We begin with the raw amino-acid sequence, 306 residues long: Non-specific ribonucleoside hydrolase RihC (306 aa).

Residue His-235 is part of the active site.

This sequence belongs to the IUNH family. RihC subfamily.

In terms of biological role, hydrolyzes both purine and pyrimidine ribonucleosides with a broad-substrate specificity. In Salmonella agona (strain SL483), this protein is Non-specific ribonucleoside hydrolase RihC.